The chain runs to 2431 residues: Nucleoprotein TPR (2431 aa).

A disordered region spans residues 1–48; the sequence is MTSGGSASRSGHRGVPMTSRGFDGSRRGSLRRAGARETASEAADGAAP. Residues 77 to 87 are sufficient for interaction with TPR; sequence AVLQQVLERPE. Residues 88–191 form a necessary for interaction with HSF1 region; that stretch reads LNKLPKSTQN…GIQSQFTRAK (104 aa). Residues 98-444 are a coiled coil; the sequence is KLEKFLAEQQ…SATKRKGAIL (347 aa). N6-acetyllysine occurs at positions 326, 386, and 419. S453 is subject to Phosphoserine. Positions 486 to 678 form a coiled coil; the sequence is EKQENKRINK…ESRQHQMQLV (193 aa). An N6-acetyllysine mark is found at K502, K531, and K551. A necessary for association to the NPC region spans residues 511–587; sequence LKRQREEYER…LMELEEARGN (77 aa). Residues S596, S597, and S706 each carry the phosphoserine modification. The stretch at 736–1246 forms a coiled coil; that stretch reads STEAIEAKAA…IEKLSDKVVT (511 aa). Residues K787, K797, K822, and K829 each carry the N6-acetyllysine modification. Over residues 989–998 the composition is skewed to polar residues; the sequence is LASQSTQRTG. The segment at 989–1011 is disordered; that stretch reads LASQSTQRTGKGQPGDRDDVDDL. The span at 1002 to 1011 shows a compositional bias: basic and acidic residues; it reads PGDRDDVDDL. A Phosphoserine modification is found at S1259. Coiled-coil stretches lie at residues 1289–1494 and 1547–1700; these read EVAQ…LDAK and VQEM…QRDE. Residues 1292-1394 form a necessary for interaction with HSF1 region; sequence QVESLRYRQR…NAELSEKSGM (103 aa). The span at 1689–1701 shows a compositional bias: basic and acidic residues; that stretch reads EHQERHLEQRDEP. Positions 1689-1744 are disordered; it reads EHQERHLEQRDEPQEPTNKAPEQQRQITLKTTPASGERGIASTSDPPTANIKPTPV. Residues 1703–1722 are compositionally biased toward polar residues; the sequence is EPTNKAPEQQRQITLKTTPA. An N6-acetyllysine modification is found at K1760. Phosphothreonine is present on T1762. Polar residues predominate over residues 1873–1898; sequence SSPVERPSTSTAVFGTVSATPSSSLP. The segment at 1873 to 2193 is disordered; sequence SSPVERPSTS…TPGIGGMQQH (321 aa). The tract at residues 1882 to 1937 is sufficient and essential for mediating its nuclear import; the sequence is STAVFGTVSATPSSSLPKRTREEEEDSTMEAGDQVSEDTVEMPLPKKLKMVTPVGT. Residues 1937-1951 are compositionally biased toward acidic residues; it reads TEEEVMAEESTDGEA. Positions 1954 to 1963 are enriched in polar residues; the sequence is QAYNQDSQDS. S1963 is modified (phosphoserine). A compositionally biased stretch (low complexity) spans 1994 to 2005; that stretch reads QSDQQTTSSQDG. Composition is skewed to acidic residues over residues 2016 to 2057 and 2067 to 2088; these read DSDD…EDSN and DGYEADDAEGGDGTDPGTETEE. Residues 2100–2132 show a composition bias toward polar residues; sequence ADSQNSGEGNTSAAESSFSQEVAREQQPTSASE. Residues S2102, S2105, S2116, S2118, and S2141 each carry the phosphoserine modification. 2 positions are modified to omega-N-methylarginine: R2174 and R2179. Residues T2184 and T2205 each carry the phosphothreonine modification. S2223 bears the Phosphoserine mark. R2231 carries the omega-N-methylarginine modification. The segment covering 2295-2312 has biased composition (polar residues); that stretch reads ESTTSDASEHASQSVPMV. The interval 2295 to 2431 is disordered; that stretch reads ESTTSDASEH…RGGINRGNIN (137 aa). Over residues 2313 to 2325 the composition is skewed to low complexity; the sequence is TTSTGTLSTTNET. Positions 2327–2340 are enriched in acidic residues; it reads AGDDGDEVFVEAES. Low complexity predominate over residues 2341 to 2351; that stretch reads EGISSEAGLEI. Positions 2353-2367 are enriched in acidic residues; it reads SQQEEEPVQASDESD. Low complexity predominate over residues 2368–2388; that stretch reads LPSTSQDPPSSSSVDTSSSQP. Residues R2411, R2413, and R2422 each carry the asymmetric dimethylarginine modification. Positions 2420-2431 are enriched in gly residues; the sequence is GGRGGINRGNIN.

This sequence belongs to the TPR family. Homodimer. Part of the nuclear pore complex (NPC). Associates with the XPO1/CRM1-mediated nuclear export complex, the Importin alpha/Importin beta receptor and the dynein 1 complex. Interacts (via C-terminal domain) with the KPNB1; the interaction occurs in a RanGTP-dependent manner. Interacts (via C-terminal region and phosphorylated form) with MAPK1/ERK2 (via phosphorylated form); the interaction requires dimerization of MAPK1/ERK2 and increases following EGF stimulation. Interacts with MAPK3/ERK1; the interaction increases following EGF stimulation. Interacts (via coiled coil region) with NUP153; the interaction is direct. Interacts with HSF1; the interaction increases in a stress-responsive manner and stimulates export of stress-induced HSP70 mRNA. Interacts with huntingtin/HTT; the interaction is inhibited by aggregated huntingtin/HTT forms with expanded polyglutamine stretch. Interacts with MAD1L1 (via N-terminal region), MAD2L1, and TTK; the interactions occurs in a microtubule-independent manner. Interacts (via middle region) with DYNLL1. Interacts with DCTN1, dynein, NUP153 and tubulin. Interacts with MTA1. Interacts with IFI204 (via C-terminal region). Interacts with IFI203. Interacts with ZC3HC1; this interaction mediates ZC3HC1 nuclear envelopes (NE)-association but also required for proper positioning of a substantial amount of TPR at the nuclear basket (NB). Post-translationally, phosphorylated. Phosphorylation occurs on serine and threonine residues (comprised in the C-terminal region) by MAPK1/ERK2 and stabilizes the interaction between these two proteins. As to expression, expressed in the heart, liver, kidney, spleen, lung and skeletal muscles.

Its subcellular location is the nucleus. It is found in the nucleus membrane. The protein resides in the nucleus envelope. The protein localises to the nuclear pore complex. It localises to the cytoplasm. Its subcellular location is the cytoskeleton. It is found in the spindle. The protein resides in the chromosome. The protein localises to the centromere. It localises to the kinetochore. Component of the nuclear pore complex (NPC), a complex required for the trafficking across the nuclear envelope. Functions as a scaffolding element in the nuclear phase of the NPC essential for normal nucleocytoplasmic transport of proteins and mRNAs, plays a role in the establishment of nuclear-peripheral chromatin compartmentalization in interphase, and in the mitotic spindle checkpoint signaling during mitosis. Involved in the quality control and retention of unspliced mRNAs in the nucleus; in association with NUP153, regulates the nuclear export of unspliced mRNA species bearing constitutive transport element (CTE) in a NXF1- and KHDRBS1-independent manner. Negatively regulates both the association of CTE-containing mRNA with large polyribosomes and translation initiation. Does not play any role in Rev response element (RRE)-mediated export of unspliced mRNAs. Implicated in nuclear export of mRNAs transcribed from heat shock gene promoters; associates both with chromatin in the HSP70 promoter and with mRNAs transcribed from this promoter under stress-induced conditions. Plays a limited role in the regulation of nuclear protein export. Modulates the nucleocytoplasmic transport of activated MAPK1/ERK2 and huntingtin/HTT and may serve as a docking site for the XPO1/CRM1-mediated nuclear export complex. Also plays a role as a structural and functional element of the perinuclear chromatin distribution; involved in the formation and/or maintenance of NPC-associated perinuclear heterochromatin exclusion zones (HEZs). Finally, acts as a spatial regulator of the spindle-assembly checkpoint (SAC) response ensuring a timely and effective recruitment of spindle checkpoint proteins like MAD1L1 and MAD2L1 to unattached kinetochore during the metaphase-anaphase transition before chromosome congression. Its N-terminus is involved in activation of oncogenic kinases. This chain is Nucleoprotein TPR, found in Mus musculus (Mouse).